The sequence spans 339 residues: RNA 3'-terminal phosphate cyclase (339 aa).

Residues Q103 and 283-287 each bind ATP; that span reads HLADQ. H308 serves as the catalytic Tele-AMP-histidine intermediate.

Belongs to the RNA 3'-terminal cyclase family. Type 1 subfamily.

Its subcellular location is the cytoplasm. The catalysed reaction is a 3'-end 3'-phospho-ribonucleotide-RNA + ATP = a 3'-end 2',3'-cyclophospho-ribonucleotide-RNA + AMP + diphosphate. Its function is as follows. Catalyzes the conversion of 3'-phosphate to a 2',3'-cyclic phosphodiester at the end of RNA. The mechanism of action of the enzyme occurs in 3 steps: (A) adenylation of the enzyme by ATP; (B) transfer of adenylate to an RNA-N3'P to produce RNA-N3'PP5'A; (C) and attack of the adjacent 2'-hydroxyl on the 3'-phosphorus in the diester linkage to produce the cyclic end product. The biological role of this enzyme is unknown but it is likely to function in some aspects of cellular RNA processing. The chain is RNA 3'-terminal phosphate cyclase from Salmonella typhimurium (strain LT2 / SGSC1412 / ATCC 700720).